Here is a 57-residue protein sequence, read N- to C-terminus: QDKIDPKMVQYQDSPKDGNKCSTCVNFEAPSSCKIVAGKISPNGWCIAYAPMEDKKG.

Residues Cys-21, Cys-24, Cys-33, and Cys-46 each coordinate [4Fe-4S] cluster.

This sequence belongs to the high-potential iron-sulfur protein (HiPIP) family. In terms of assembly, homodimer.

Specific class of high-redox-potential 4Fe-4S ferredoxins. Functions in anaerobic electron transport in most purple and in some other photosynthetic bacteria and in at least one genus (Paracoccus) of halophilic, denitrifying bacteria. This chain is High-potential iron-sulfur protein (hip), found in Rhodopila globiformis (Rhodopseudomonas globiformis).